A 115-amino-acid polypeptide reads, in one-letter code: NADH-ubiquinone oxidoreductase chain 3 (115 aa).

A run of 3 helical transmembrane segments spans residues 5 to 25 (LTLM…FWLP), 55 to 75 (FFLV…LLPL), and 86 to 106 (LMLT…AYEW).

Belongs to the complex I subunit 3 family. As to quaternary structure, core subunit of respiratory chain NADH dehydrogenase (Complex I) which is composed of 45 different subunits. Interacts with TMEM186. Interacts with TMEM242.

The protein resides in the mitochondrion inner membrane. The enzyme catalyses a ubiquinone + NADH + 5 H(+)(in) = a ubiquinol + NAD(+) + 4 H(+)(out). Functionally, core subunit of the mitochondrial membrane respiratory chain NADH dehydrogenase (Complex I) which catalyzes electron transfer from NADH through the respiratory chain, using ubiquinone as an electron acceptor. Essential for the catalytic activity of complex I. This is NADH-ubiquinone oxidoreductase chain 3 from Avahi cleesei (Cleese's woolly lemur).